We begin with the raw amino-acid sequence, 544 residues long: MLLKSLFPSILAATSFVSSVAAEDLPAIEIVGNKFFYSNNGSQFYIKGIAYQQNNLDSNESFVDPLANPEHCKRDIPYLEAVDTNVIRVYALDTSQDHTECMQMLQDAGIYVIADLSQPDESINRDDPSWDLDLFERYTSVVDLFHNYTNILGFFAGNEVTNKKSNTDASAFVKAAIRDTKAYIKSKGYRSIPVGYSANDDSAIRVSLADYFACGDEDEAADFFGINMYEWCGDSSYKASGYESATNDYKNLGIPIFFSEYGCNEVRPRKFTEVATLFGDQMTPVWSGGIVYMYFEEENNYGLVSIKDNTVSTLKDYSYYSSEIKDIHPSSAKASAESASSISRTTCPTNTNNWEASTNLPPTPDKEVCECMSASLKCVVDDKVDSDDYSDLFSYICAKIDCDGINANGTTGEYGAYSPCHSKDKLSFVMNLYYEQNKESKSACDFGGSASLQSAKTASSCSAYLSSAGSSGLGTVSGTVRTDTSQSTSDSGSGSSSSSSSSSSSSSSGSSGSKSAASIVSVNLLTKIATIGISIVVGFGLITM.

The first 22 residues, 1–22, serve as a signal peptide directing secretion; the sequence is MLLKSLFPSILAATSFVSSVAA. Residues N40 and N59 are each glycosylated (N-linked (GlcNAc...) asparagine). C72 and C101 are disulfide-bonded. The N-linked (GlcNAc...) asparagine glycan is linked to N147. 5 disulfide bridges follow: C214–C347, C232–C263, C369–C420, C378–C444, and C397–C402. N408 is a glycosylation site (N-linked (GlcNAc...) asparagine). The tract at residues 469-514 is disordered; the sequence is GSSGLGTVSGTVRTDTSQSTSDSGSGSSSSSSSSSSSSSSGSSGSK. A lipid anchor (GPI-anchor amidated serine) is attached at S515. The propeptide at 516 to 544 is removed in mature form; the sequence is AASIVSVNLLTKIATIGISIVVGFGLITM.

This sequence belongs to the glycosyl hydrolase 72 family.

It is found in the cell membrane. Functionally, required for apical cell growth and plays an essential role in morphogenesis. May be integral to the pathogenic ability of the organism. The chain is pH-responsive protein 2 (PHR2) from Candida albicans (strain SC5314 / ATCC MYA-2876) (Yeast).